A 794-amino-acid polypeptide reads, in one-letter code: Zinc finger protein 148 (794 aa).

Residue Lys6 forms a Glycyl lysine isopeptide (Lys-Gly) (interchain with G-Cter in SUMO2) linkage. Ser51 is modified (phosphoserine). Glycyl lysine isopeptide (Lys-Gly) (interchain with G-Cter in SUMO2) cross-links involve residues Lys88, Lys115, and Lys132. Residues 171–193 (HVCEHCNAAFRTNYHLQRHVFIH) form a C2H2-type 1 zinc finger. Thr194 carries the post-translational modification Phosphothreonine. 2 consecutive C2H2-type zinc fingers follow at residues 199–221 (FQCS…EKIH) and 227–249 (FRCD…KRTH). Phosphoserine is present on Ser250. Residues 255-278 (YQCEYCLQYFSRTDRVLKHKRMCH) form a C2H2-type 4 zinc finger. Lys291 is covalently cross-linked (Glycyl lysine isopeptide (Lys-Gly) (interchain with G-Cter in SUMO2)). Positions 298–338 (EEDSGFSTSPKDNSLPKKKRQKTEKKSSGMDKESSLDKSDL) are disordered. 2 positions are modified to phosphoserine: Ser301 and Ser306. A Glycyl lysine isopeptide (Lys-Gly) (interchain with G-Cter in SUMO2) cross-link involves residue Lys308. A compositionally biased stretch (basic and acidic residues) spans 321-338 (EKKSSGMDKESSLDKSDL). Residue Lys356 forms a Glycyl lysine isopeptide (Lys-Gly) (interchain with G-Cter in SUMO1); alternate linkage. A Glycyl lysine isopeptide (Lys-Gly) (interchain with G-Cter in SUMO2); alternate cross-link involves residue Lys356. Residue Lys402 forms a Glycyl lysine isopeptide (Lys-Gly) (interchain with G-Cter in SUMO2) linkage. At Ser412 the chain carries Phosphoserine. Residues Lys421 and Lys424 each participate in a glycyl lysine isopeptide (Lys-Gly) (interchain with G-Cter in SUMO2) cross-link. Over residues 575–588 (SSEVPEVTQSENVG) the composition is skewed to polar residues. The tract at residues 575–596 (SSEVPEVTQSENVGSSSQASSS) is disordered. Lys607 is subject to N6-acetyllysine. Phosphoserine is present on residues Ser665 and Ser784. The disordered stretch occupies residues 775–794 (NDNRAGMTSSPDATTGQTFG).

It belongs to the krueppel C2H2-type zinc-finger protein family. Interacts with HNRNPDL. Interacts with the 5FMC complex; the interaction requires association with CHTOP. Interacts with CAVIN1. Post-translationally, sumoylated with SUMO2. Desumoylated by SENP3, resulting in the stimulation of transcription of its target genes.

It is found in the nucleus. Its function is as follows. Involved in transcriptional regulation. Represses the transcription of a number of genes including gastrin, stromelysin and enolase. Binds to the G-rich box in the enhancer region of these genes. This chain is Zinc finger protein 148 (ZNF148), found in Bos taurus (Bovine).